Reading from the N-terminus, the 207-residue chain is MASSLCVSNSTICPLPNVSSQPLLSFSHSLRPFISKSKPMCASIQKRDGSQFVVKSQALDFSGTFFEGGFGSDDDPTSPSGSGVSTALEDKPEPQCPPGLRQYETMAVLRPDMSEDERLGLTQKYEELLVAGGGMYVEVFNRGVIPLAYSIRKKNKAGETNTYLDGIYLLFTYFTKPESIVPLETVLTADDDIIRSSSFKIKKRKYN.

Residues 1–59 constitute a chloroplast transit peptide; it reads MASSLCVSNSTICPLPNVSSQPLLSFSHSLRPFISKSKPMCASIQKRDGSQFVVKSQAL. Residues 69–99 are disordered; it reads GFGSDDDPTSPSGSGVSTALEDKPEPQCPPG. Over residues 77 to 86 the composition is skewed to low complexity; it reads TSPSGSGVST.

The protein belongs to the bacterial ribosomal protein bS6 family. As to quaternary structure, part of the 30S ribosomal subunit.

It localises to the plastid. It is found in the chloroplast. Its function is as follows. Binds together with bS18 to 16S ribosomal RNA. The protein is Small ribosomal subunit protein bS6c (RPS6) of Arabidopsis thaliana (Mouse-ear cress).